Reading from the N-terminus, the 130-residue chain is Histone H2B (130 aa).

The interval 1–31 is disordered; that stretch reads MAKSARHVTGKAPSSLDAHDRKKSKKKSSSM. Lys122 is covalently cross-linked (Glycyl lysine isopeptide (Lys-Gly) (interchain with G-Cter in ubiquitin)).

It belongs to the histone H2B family. The nucleosome is a histone octamer containing two molecules each of H2A, H2B, H3 and H4 assembled in one H3-H4 heterotetramer and two H2A-H2B heterodimers. The octamer wraps approximately 147 bp of DNA. Monoubiquitinated to form H2BK123ub1. H2BK123ub1 gives a specific tag for epigenetic transcriptional activation and is also prerequisite for H3K4me and H3K79me formation.

The protein resides in the nucleus. The protein localises to the chromosome. Core component of nucleosome. Nucleosomes wrap and compact DNA into chromatin, limiting DNA accessibility to the cellular machineries which require DNA as a template. Histones thereby play a central role in transcription regulation, DNA repair, DNA replication and chromosomal stability. DNA accessibility is regulated via a complex set of post-translational modifications of histones, also called histone code, and nucleosome remodeling. The chain is Histone H2B (HTB1) from Encephalitozoon cuniculi (strain GB-M1) (Microsporidian parasite).